The following is a 72-amino-acid chain: Prokaryotic ubiquitin-like protein Pup (72 aa).

Residues 1 to 10 (MATKDTGGGQ) are compositionally biased toward gly residues. The interval 1-45 (MATKDTGGGQQKATRNTEEVEEQAQDAQASEDLKERQEKLSDDVD) is disordered. Residues 9–60 (GQQKATRNTEEVEEQAQDAQASEDLKERQEKLSDDVDSVLDEIDDVLEENAE) adopt a coiled-coil conformation. Positions 28-66 (QASEDLKERQEKLSDDVDSVLDEIDDVLEENAEDFVRSF) are ARC ATPase binding. The segment covering 31–42 (EDLKERQEKLSD) has biased composition (basic and acidic residues). Residue Glu72 forms an Isoglutamyl lysine isopeptide (Glu-Lys) (interchain with K-? in acceptor proteins) linkage.

Belongs to the prokaryotic ubiquitin-like protein family. Strongly interacts with the proteasome-associated ATPase ARC through a hydrophobic interface; the interacting region of Pup lies in its C-terminal half. There is one Pup binding site per ARC hexamer ring.

The protein operates within protein degradation; proteasomal Pup-dependent pathway. In terms of biological role, protein modifier that is covalently attached to lysine residues of substrate proteins, thereby targeting them for proteasomal degradation. The tagging system is termed pupylation. The sequence is that of Prokaryotic ubiquitin-like protein Pup from Streptomyces avermitilis (strain ATCC 31267 / DSM 46492 / JCM 5070 / NBRC 14893 / NCIMB 12804 / NRRL 8165 / MA-4680).